The following is a 338-amino-acid chain: Ferredoxin--NADP reductase (338 aa).

8 residues coordinate FAD: Thr-14, Asp-33, Gln-41, Tyr-46, Val-86, Phe-120, Asp-284, and Thr-325.

It belongs to the ferredoxin--NADP reductase type 2 family. In terms of assembly, homodimer. It depends on FAD as a cofactor.

It catalyses the reaction 2 reduced [2Fe-2S]-[ferredoxin] + NADP(+) + H(+) = 2 oxidized [2Fe-2S]-[ferredoxin] + NADPH. This chain is Ferredoxin--NADP reductase, found in Pelagibacter ubique (strain HTCC1062).